The chain runs to 145 residues: Large ribosomal subunit protein uL11 (145 aa).

This sequence belongs to the universal ribosomal protein uL11 family. As to quaternary structure, part of the ribosomal stalk of the 50S ribosomal subunit. Interacts with L10 and the large rRNA to form the base of the stalk. L10 forms an elongated spine to which L12 dimers bind in a sequential fashion forming a multimeric L10(L12)X complex. Post-translationally, one or more lysine residues are methylated.

Functionally, forms part of the ribosomal stalk which helps the ribosome interact with GTP-bound translation factors. The chain is Large ribosomal subunit protein uL11 from Persephonella marina (strain DSM 14350 / EX-H1).